A 148-amino-acid polypeptide reads, in one-letter code: MDFKNLQYESLSYIICNLQKNFKLYCEKCLKPYKLTNGLYFYLIYINKNRNCSLNDVSTEFEVDKAHTTRTISRLEQDGYIEKIQNPNDSRAFQLRVTDKGEEVLGDIKNIFSKWDNHIKKEFSDTEYKELVKNLHVVKDIKTAVEEE.

The region spanning 1–140 (MDFKNLQYES…LVKNLHVVKD (140 aa)) is the HTH marR-type domain. The H-T-H motif DNA-binding region spans 54-77 (LNDVSTEFEVDKAHTTRTISRLEQ).

Its function is as follows. Transcription regulator that regulates expression of the bilirubin reductase operon (bilQ, bilR and bilS). This chain is HTH-type transcriptional regulator BilQ, found in Clostridioides difficile (strain CD3).